Reading from the N-terminus, the 291-residue chain is Inactive dihydropteroate synthase 2 (291 aa).

The 258-residue stretch at 15-272 folds into the Pterin-binding domain; that stretch reads QLIMAIVNRT…EVVATRRVLE (258 aa).

It belongs to the DHPS family. In terms of assembly, homodimer.

In terms of biological role, has very low affinity for the DHPS substrate 6-hydroxymethyl-7,8-dihydropterin-pyrophosphate, but can bind the inhibitor dapsone. Seems to lack dihydropteroate synthase activity, and does probably not function in folate metabolism. In Mycobacterium leprae (strain TN), this protein is Inactive dihydropteroate synthase 2 (folP2).